A 392-amino-acid polypeptide reads, in one-letter code: Putative glutamate--cysteine ligase 2 (392 aa).

The segment at 1 to 21 (MMPVSGWRAVSSAPASSSAGR) is disordered. Positions 9–19 (AVSSAPASSSA) are enriched in low complexity.

It belongs to the glutamate--cysteine ligase type 2 family. YbdK subfamily.

The catalysed reaction is L-cysteine + L-glutamate + ATP = gamma-L-glutamyl-L-cysteine + ADP + phosphate + H(+). Its function is as follows. ATP-dependent carboxylate-amine ligase which exhibits weak glutamate--cysteine ligase activity. This chain is Putative glutamate--cysteine ligase 2, found in Mycobacterium ulcerans (strain Agy99).